The sequence spans 396 residues: METFFTSESVSEGHPDKLCDQISDAVLDACLSQDPHSCVACETFASTSLILIGGEISTRAHINLTQIARDVAADIGYVSADVGLDAASMAVLDMTHHQSPDIAQGVHGAGLKEFAGSQGAGDQGIMFGFACRETPEFMPAPLMCAHAVVRYAATLRHERRVPWLRPDAKSQVTVQYEGHRPVRISAVVFSQQHDPSPSYETIRETLIEEIVRPALAPTGLLDENTRFFINPTGRFVIGGPFGDTGLTGRKIIVDTYGGMGRHGGGSFSGKDASKVDRSAAYMARYIAKNIVAADLAERCEVQLAYAIGVPYPVSLRIETFGTARASESHITHAVKEIFDLTPAGIVRTLDLCAPRYRSTAVYGHFGREQFPWERTDCVCDLQRAVRPFALSGQIKE.

His-14 is a binding site for ATP. Residue Asp-16 participates in Mg(2+) binding. Residue Glu-42 participates in K(+) binding. L-methionine is bound by residues Glu-55 and Gln-98. A flexible loop region spans residues 98–108; the sequence is QSPDIAQGVHG. Residues 167–169, 234–235, Asp-243, 249–250, Ser-266, and Lys-270 each bind ATP; these read DAK, RF, and RK. Asp-243 contacts L-methionine. Lys-274 is a binding site for L-methionine.

Belongs to the AdoMet synthase family. As to quaternary structure, homotetramer; dimer of dimers. It depends on Mg(2+) as a cofactor. K(+) serves as cofactor.

The protein resides in the cytoplasm. The catalysed reaction is L-methionine + ATP + H2O = S-adenosyl-L-methionine + phosphate + diphosphate. The protein operates within amino-acid biosynthesis; S-adenosyl-L-methionine biosynthesis; S-adenosyl-L-methionine from L-methionine: step 1/1. Functionally, catalyzes the formation of S-adenosylmethionine (AdoMet) from methionine and ATP. The overall synthetic reaction is composed of two sequential steps, AdoMet formation and the subsequent tripolyphosphate hydrolysis which occurs prior to release of AdoMet from the enzyme. The polypeptide is S-adenosylmethionine synthase (Treponema pallidum (strain Nichols)).